An 88-amino-acid polypeptide reads, in one-letter code: HssA/B-like protein 19 (88 aa).

It belongs to the hssA/B family.

This chain is HssA/B-like protein 19 (hssl19), found in Dictyostelium discoideum (Social amoeba).